The sequence spans 1562 residues: Cell wall protein RBR3 (1562 aa).

A signal peptide spans 1–20; sequence MIIFRKSFFTFWLLLNSVLA. N190 is a glycosylation site (N-linked (GlcNAc...) asparagine). A compositionally biased stretch (low complexity) spans 338 to 353; sequence APGTNPTEYTTTITTT. Positions 338–366 are disordered; it reads APGTNPTEYTTTITTTNSAGKPLTETGVV. N373 carries N-linked (GlcNAc...) asparagine glycosylation. 2 stretches are compositionally biased toward low complexity: residues 383 to 415 and 422 to 729; these read FPTS…SQPS and SSSK…ISAT. Disordered stretches follow at residues 383–729, 1404–1424, and 1455–1486; these read FPTS…ISAT, GSGS…SSSN, and YSSG…GNSN. N-linked (GlcNAc...) asparagine glycans are attached at residues N602, N679, and N705. Positions 1407–1419 are enriched in gly residues; it reads SDSGSGSGSGSGS. The segment covering 1468–1486 has biased composition (polar residues); that stretch reads GANNVGSNQTPTVSGGNSN. Residue N1538 is the site of GPI-anchor amidated asparagine attachment. Residues 1539–1562 constitute a propeptide, removed in mature form; that stretch reads SGSKFSVGKSAFIAIILTTFIGFI.

This sequence belongs to the HYR1/IFF family. In terms of processing, the GPI-anchor is attached to the protein in the endoplasmic reticulum and serves to target the protein to the cell surface. There, the glucosamine-inositol phospholipid moiety is cleaved off and the GPI-modified mannoprotein is covalently attached via its lipidless GPI glycan remnant to the 1,6-beta-glucan of the outer cell wall layer.

It is found in the secreted. The protein resides in the cell wall. The protein localises to the membrane. In terms of biological role, GPI-anchored cell wall protein involved in cell wall organization, hyphal growth, as well as in host-fungal interaction and virulence. The protein is Cell wall protein RBR3 (RBR3) of Candida albicans (strain SC5314 / ATCC MYA-2876) (Yeast).